Consider the following 453-residue polypeptide: Allantoinase (453 aa).

Residues histidine 59, histidine 61, lysine 146, histidine 186, histidine 242, and aspartate 315 each coordinate Zn(2+). Lysine 146 is modified (N6-carboxylysine).

The protein belongs to the metallo-dependent hydrolases superfamily. Allantoinase family. Homotetramer. It depends on Zn(2+) as a cofactor. Post-translationally, carboxylation allows a single lysine to coordinate two zinc ions.

It carries out the reaction (S)-allantoin + H2O = allantoate + H(+). It participates in nitrogen metabolism; (S)-allantoin degradation; allantoate from (S)-allantoin: step 1/1. In terms of biological role, catalyzes the conversion of allantoin (5-ureidohydantoin) to allantoic acid by hydrolytic cleavage of the five-member hydantoin ring. The protein is Allantoinase of Escherichia coli O9:H4 (strain HS).